Here is a 111-residue protein sequence, read N- to C-terminus: Large ribosomal subunit protein bL20c (111 aa).

Belongs to the bacterial ribosomal protein bL20 family.

The protein resides in the plastid. It is found in the chloroplast. Binds directly to 23S ribosomal RNA and is necessary for the in vitro assembly process of the 50S ribosomal subunit. It is not involved in the protein synthesizing functions of that subunit. This is Large ribosomal subunit protein bL20c from Ostreococcus tauri.